Reading from the N-terminus, the 317-residue chain is Melanocyte-stimulating hormone receptor (317 aa).

At 1-37 (MPIHGAPRKLLGSLNSTPTATPKLGLAANHTGAPCLE) the chain is on the extracellular side. Residue Asn29 is glycosylated (N-linked (GlcNAc...) asparagine). The helical transmembrane segment at 38 to 63 (VSIPDGLFLSLGLVSLVENVLVVAAI) threads the bilayer. Residues 64–72 (AKNRNLHSP) lie on the Cytoplasmic side of the membrane. A helical membrane pass occupies residues 73–93 (MYCFICCLALSDLLVSGSNML). Residues 94 to 118 (EMAVVLLLEGGALATRASVVQQLHN) lie on the Extracellular side of the membrane. The helical transmembrane segment at 119–140 (TIDVLTCSSMLCSLCFLGAIAV) threads the bilayer. Residues 141–163 (DRHISIFYALRYHSIMTLPRAQR) lie on the Cytoplasmic side of the membrane. A helical membrane pass occupies residues 164-183 (VIAAIWVASILSSTLFITYY). Over 184–191 (DHAAVLLC) the chain is Extracellular. A helical transmembrane segment spans residues 192–211 (LVVFFLAMLVLMAVLYVHML). At 212-240 (ARACQHAQGITRLHKRQPPAHQGFGLRGA) the chain is on the cytoplasmic side. The chain crosses the membrane as a helical span at residues 241-266 (ATLTILLGIFFLCWGPFFLHLKLVVF). The Extracellular portion of the chain corresponds to 267-279 (CPQHLTCSCIFKN). The helical transmembrane segment at 280–300 (FKVFLTLIICNTIIDPLIYAF) threads the bilayer. Residues 301–317 (RSQELRRTLKEVLLCSW) are Cytoplasmic-facing. Cys315 is lipidated: S-palmitoyl cysteine.

This sequence belongs to the G-protein coupled receptor 1 family. In terms of assembly, interacts with MGRN1, but does not undergo MGRN1-mediated ubiquitination; this interaction competes with GNAS-binding and thus inhibits agonist-induced cAMP production. Interacts with OPN3; the interaction results in a decrease in MC1R-mediated cAMP signaling and ultimately a decrease in melanin production in melanocytes.

Its subcellular location is the cell membrane. Its function is as follows. Receptor for MSH (alpha, beta and gamma) and ACTH. The activity of this receptor is mediated by G proteins which activate adenylate cyclase. Mediates melanogenesis, the production of eumelanin (black/brown) and phaeomelanin (red/yellow), via regulation of cAMP signaling in melanocytes. In Saimiri oerstedii (Central American squirrel monkey), this protein is Melanocyte-stimulating hormone receptor (MC1R).